The sequence spans 424 residues: GTPase Obg (424 aa).

The region spanning Met1–Leu158 is the Obg domain. Positions Ala159–Pro329 constitute an OBG-type G domain. Residues Gly165 to Ser172, Phe190 to Val194, Asp212 to Gly215, Asn282 to Asp285, and Ser310 to Ala312 each bind GTP. Mg(2+) is bound by residues Ser172 and Thr192. One can recognise an OCT domain in the interval Thr347–Glu424.

It belongs to the TRAFAC class OBG-HflX-like GTPase superfamily. OBG GTPase family. In terms of assembly, monomer. Requires Mg(2+) as cofactor.

It is found in the cytoplasm. In terms of biological role, an essential GTPase which binds GTP, GDP and possibly (p)ppGpp with moderate affinity, with high nucleotide exchange rates and a fairly low GTP hydrolysis rate. Plays a role in control of the cell cycle, stress response, ribosome biogenesis and in those bacteria that undergo differentiation, in morphogenesis control. The protein is GTPase Obg of Desulfitobacterium hafniense (strain Y51).